Consider the following 291-residue polypeptide: tRNA dimethylallyltransferase (291 aa).

17–24 contacts ATP; it reads GPTASGKS. 19 to 24 is a substrate binding site; it reads TASGKS.

The protein belongs to the IPP transferase family. As to quaternary structure, monomer. It depends on Mg(2+) as a cofactor.

It catalyses the reaction adenosine(37) in tRNA + dimethylallyl diphosphate = N(6)-dimethylallyladenosine(37) in tRNA + diphosphate. In terms of biological role, catalyzes the transfer of a dimethylallyl group onto the adenine at position 37 in tRNAs that read codons beginning with uridine, leading to the formation of N6-(dimethylallyl)adenosine (i(6)A). This chain is tRNA dimethylallyltransferase, found in Cereibacter sphaeroides (strain ATCC 17025 / ATH 2.4.3) (Rhodobacter sphaeroides).